A 225-amino-acid chain; its full sequence is Ribosome maturation factor RimP (225 aa).

Belongs to the RimP family.

The protein localises to the cytoplasm. Functionally, required for maturation of 30S ribosomal subunits. The sequence is that of Ribosome maturation factor RimP from Rhodospirillum rubrum (strain ATCC 11170 / ATH 1.1.1 / DSM 467 / LMG 4362 / NCIMB 8255 / S1).